Reading from the N-terminus, the 342-residue chain is Farnesyl pyrophosphate synthase 2 (342 aa).

Isopentenyl diphosphate contacts are provided by Lys-48, Arg-51, and Gln-86. Positions 93 and 97 each coordinate Mg(2+). A dimethylallyl diphosphate-binding site is contributed by Arg-102. Arg-103 lines the isopentenyl diphosphate pocket. Dimethylallyl diphosphate-binding residues include Lys-190, Thr-191, Gln-229, Lys-246, and Lys-255.

This sequence belongs to the FPP/GGPP synthase family. Mg(2+) is required as a cofactor.

It localises to the cytoplasm. The catalysed reaction is isopentenyl diphosphate + dimethylallyl diphosphate = (2E)-geranyl diphosphate + diphosphate. It catalyses the reaction isopentenyl diphosphate + (2E)-geranyl diphosphate = (2E,6E)-farnesyl diphosphate + diphosphate. Its pathway is isoprenoid biosynthesis; farnesyl diphosphate biosynthesis; farnesyl diphosphate from geranyl diphosphate and isopentenyl diphosphate: step 1/1. The protein operates within isoprenoid biosynthesis; geranyl diphosphate biosynthesis; geranyl diphosphate from dimethylallyl diphosphate and isopentenyl diphosphate: step 1/1. Functionally, catalyzes the sequential condensation of isopentenyl pyrophosphate with the allylic pyrophosphates, dimethylallyl pyrophosphate, and then with the resultant geranylpyrophosphate to the ultimate product farnesyl pyrophosphate. This Parthenium argentatum (Guayule rubber plant) protein is Farnesyl pyrophosphate synthase 2 (FPS2).